The following is a 300-amino-acid chain: 4-hydroxy-tetrahydrodipicolinate synthase (300 aa).

Thr-49 is a binding site for pyruvate. Tyr-137 acts as the Proton donor/acceptor in catalysis. Residue Lys-166 is the Schiff-base intermediate with substrate of the active site. Pyruvate is bound at residue Ile-208.

The protein belongs to the DapA family. As to quaternary structure, homotetramer; dimer of dimers.

Its subcellular location is the cytoplasm. The catalysed reaction is L-aspartate 4-semialdehyde + pyruvate = (2S,4S)-4-hydroxy-2,3,4,5-tetrahydrodipicolinate + H2O + H(+). It participates in amino-acid biosynthesis; L-lysine biosynthesis via DAP pathway; (S)-tetrahydrodipicolinate from L-aspartate: step 3/4. Its function is as follows. Catalyzes the condensation of (S)-aspartate-beta-semialdehyde [(S)-ASA] and pyruvate to 4-hydroxy-tetrahydrodipicolinate (HTPA). This is 4-hydroxy-tetrahydrodipicolinate synthase from Methanopyrus kandleri (strain AV19 / DSM 6324 / JCM 9639 / NBRC 100938).